The chain runs to 361 residues: Mannose-1-phosphate guanyltransferase (361 aa).

The protein belongs to the transferase hexapeptide repeat family.

The protein localises to the cytoplasm. The enzyme catalyses alpha-D-mannose 1-phosphate + GTP + H(+) = GDP-alpha-D-mannose + diphosphate. It participates in nucleotide-sugar biosynthesis; GDP-alpha-D-mannose biosynthesis; GDP-alpha-D-mannose from alpha-D-mannose 1-phosphate (GTP route): step 1/1. In terms of biological role, involved in cell wall synthesis where it is required for glycosylation. Involved in cell cycle progression through cell-size checkpoint. The polypeptide is Mannose-1-phosphate guanyltransferase (MPG1) (Eremothecium gossypii (strain ATCC 10895 / CBS 109.51 / FGSC 9923 / NRRL Y-1056) (Yeast)).